We begin with the raw amino-acid sequence, 283 residues long: Tumor necrosis factor receptor superfamily member 14 (283 aa).

Residues 1-38 (MEPPGDWGPPPWRSTPKTDVLRLVLYLTFLGAPCYAPA) form the signal peptide. Over 39–202 (LPSCKEDEYP…GAGTSSSHWV (164 aa)) the chain is Extracellular. 8 disulfides stabilise this stretch: cysteine 42–cysteine 53, cysteine 54–cysteine 67, cysteine 57–cysteine 75, cysteine 78–cysteine 93, cysteine 96–cysteine 111, cysteine 99–cysteine 119, cysteine 121–cysteine 138, and cysteine 127–cysteine 135. 3 TNFR-Cys repeats span residues 42–75 (CKED…GTVC), 78–119 (CPPG…NAVC), and 121–162 (CSPG…DTLC). Asparagine 110 carries N-linked (GlcNAc...) asparagine glycosylation. A glycan (N-linked (GlcNAc...) asparagine) is linked at asparagine 173. Residues 203–223 (WWFLSGSLVIVIVCSTVGLII) traverse the membrane as a helical segment. Over 224-283 (CVKRRKPRGDVVKVIVSVQRKRQEAEGEATVIEALQAPPDVTTVAVEETIPSFTGRSPNH) the chain is Cytoplasmic. Serine 240 is subject to Phosphoserine.

The protein belongs to the tumor necrosis factor receptor superfamily. As to quaternary structure, interacts with TRAF2, TRAF3 and TRAF5. Interacts (via CRD1/TNFR-Cys 1) with CD160; this interaction is direct. Interacts with LTA and TNFSF14. Interacts (via CRD1/TNFR-Cys 1) in cis and trans with BTLA; the cis interactions inhibits the trans interactions. (Microbial infection) Interacts with herpes simplex virus 1/HHV-1 envelope glycoprotein D. In terms of assembly, (Microbial infection) Interacts with herpes simplex virus 2/HHV-2 envelope glycoprotein D. N-glycosylated. In terms of tissue distribution, widely expressed, with the highest expression in lung, spleen and thymus. Expressed in a subpopulation of B cells and monocytes. Expressed in naive T cells.

Its subcellular location is the cell membrane. Functionally, receptor for four distinct ligands: The TNF superfamily members TNFSF14/LIGHT and homotrimeric LTA/lymphotoxin-alpha and the immunoglobulin superfamily members BTLA and CD160, altogether defining a complex stimulatory and inhibitory signaling network. Signals via the TRAF2-TRAF3 E3 ligase pathway to promote immune cell survival and differentiation. Participates in bidirectional cell-cell contact signaling between antigen presenting cells and lymphocytes. In response to ligation of TNFSF14/LIGHT, delivers costimulatory signals to T cells, promoting cell proliferation and effector functions. Interacts with CD160 on NK cells, enhancing IFNG production and anti-tumor immune response. In the context of bacterial infection, acts as a signaling receptor on epithelial cells for CD160 from intraepithelial lymphocytes, triggering the production of antimicrobial proteins and pro-inflammatory cytokines. Upon binding to CD160 on activated CD4+ T cells, down-regulates CD28 costimulatory signaling, restricting memory and alloantigen-specific immune response. May interact in cis (on the same cell) or in trans (on other cells) with BTLA. In cis interactions, appears to play an immune regulatory role inhibiting in trans interactions in naive T cells to maintain a resting state. In trans interactions, can predominate during adaptive immune response to provide survival signals to effector T cells. Its function is as follows. (Microbial infection) Acts as a receptor for Herpes simplex virus 1/HHV-1. (Microbial infection) Acts as a receptor for Herpes simplex virus 2/HHV-2. This chain is Tumor necrosis factor receptor superfamily member 14, found in Homo sapiens (Human).